The following is a 242-amino-acid chain: Segregation and condensation protein A (242 aa).

The protein belongs to the ScpA family. As to quaternary structure, component of a cohesin-like complex composed of ScpA, ScpB and the Smc homodimer, in which ScpA and ScpB bind to the head domain of Smc. The presence of the three proteins is required for the association of the complex with DNA.

The protein resides in the cytoplasm. Functionally, participates in chromosomal partition during cell division. May act via the formation of a condensin-like complex containing Smc and ScpB that pull DNA away from mid-cell into both cell halves. The protein is Segregation and condensation protein A of Streptococcus mitis.